A 371-amino-acid polypeptide reads, in one-letter code: Alanine dehydrogenase (371 aa).

Substrate contacts are provided by R15 and K75. H96 (proton donor/acceptor) is an active-site residue. NAD(+)-binding positions include S134, 178-179 (TA), D198, K203, S220, 239-240 (VL), 267-270 (IAID), R279, and 298-301 (VANM). D270 functions as the Proton donor/acceptor in the catalytic mechanism. 2 residues coordinate Mg(2+): E323 and H327.

Belongs to the AlaDH/PNT family. As to quaternary structure, homohexamer. Trimer of dimers. Mg(2+) serves as cofactor.

The protein localises to the secreted. It catalyses the reaction L-alanine + NAD(+) + H2O = pyruvate + NH4(+) + NADH + H(+). It participates in amino-acid degradation; L-alanine degradation via dehydrogenase pathway; NH(3) and pyruvate from L-alanine: step 1/1. Its activity is regulated as follows. Inhibited by CuSO(4) and ZnCl(2). Its function is as follows. Catalyzes the reversible reductive amination of pyruvate to L-alanine. However, since the physiological environment of M.tuberculosis has a neutral pH, it can be assumed that the enzyme catalyzes exclusively the formation of L-alanine. May play a role in cell wall synthesis as L-alanine is an important constituent of the peptidoglycan layer. The polypeptide is Alanine dehydrogenase (ald) (Mycobacterium tuberculosis (strain ATCC 25618 / H37Rv)).